An 809-amino-acid chain; its full sequence is Bifunctional enzyme MurC/Ddl (809 aa).

The segment at Met-1–Lys-450 is UDP-N-acetylmuramate--alanine ligase. ATP-binding positions include Gly-111–Gly-117 and Ile-606–Ile-661. A D-alanine--D-alanine ligase region spans residues Lys-451–Arg-809. The 212-residue stretch at Lys-573 to Ile-784 folds into the ATP-grasp domain. Mg(2+) is bound by residues Asp-738, Glu-751, and Asn-753.

It in the N-terminal section; belongs to the MurCDEF family. In the C-terminal section; belongs to the D-alanine--D-alanine ligase family. Mg(2+) is required as a cofactor. Requires Mn(2+) as cofactor.

It is found in the cytoplasm. It catalyses the reaction UDP-N-acetyl-alpha-D-muramate + L-alanine + ATP = UDP-N-acetyl-alpha-D-muramoyl-L-alanine + ADP + phosphate + H(+). The catalysed reaction is 2 D-alanine + ATP = D-alanyl-D-alanine + ADP + phosphate + H(+). Its pathway is cell wall biogenesis; peptidoglycan biosynthesis. Cell wall formation. This is Bifunctional enzyme MurC/Ddl (murC/ddl) from Chlamydia pneumoniae (Chlamydophila pneumoniae).